The following is a 499-amino-acid chain: Glutamate--tRNA ligase (499 aa).

The 'HIGH' region signature appears at 12–22 (PSPTGHLHIGN). Positions 259 to 263 (KLSKR) match the 'KMSKS' region motif. Lysine 262 provides a ligand contact to ATP.

Belongs to the class-I aminoacyl-tRNA synthetase family. Glutamate--tRNA ligase type 1 subfamily. In terms of assembly, monomer.

Its subcellular location is the cytoplasm. It carries out the reaction tRNA(Glu) + L-glutamate + ATP = L-glutamyl-tRNA(Glu) + AMP + diphosphate. Functionally, catalyzes the attachment of glutamate to tRNA(Glu) in a two-step reaction: glutamate is first activated by ATP to form Glu-AMP and then transferred to the acceptor end of tRNA(Glu). The polypeptide is Glutamate--tRNA ligase (Lactobacillus gasseri (strain ATCC 33323 / DSM 20243 / BCRC 14619 / CIP 102991 / JCM 1131 / KCTC 3163 / NCIMB 11718 / NCTC 13722 / AM63)).